A 341-amino-acid chain; its full sequence is Glucokinase (341 aa).

Residue 7 to 12 coordinates ATP; it reads GDIGGT.

This sequence belongs to the bacterial glucokinase family.

It is found in the cytoplasm. It catalyses the reaction D-glucose + ATP = D-glucose 6-phosphate + ADP + H(+). The protein is Glucokinase of Nostoc punctiforme (strain ATCC 29133 / PCC 73102).